Here is a 323-residue protein sequence, read N- to C-terminus: Tetraacyldisaccharide 4'-kinase (323 aa).

Residue 56 to 63 (TVGGVGKT) coordinates ATP.

This sequence belongs to the LpxK family.

It catalyses the reaction a lipid A disaccharide + ATP = a lipid IVA + ADP + H(+). It participates in glycolipid biosynthesis; lipid IV(A) biosynthesis; lipid IV(A) from (3R)-3-hydroxytetradecanoyl-[acyl-carrier-protein] and UDP-N-acetyl-alpha-D-glucosamine: step 6/6. Its function is as follows. Transfers the gamma-phosphate of ATP to the 4'-position of a tetraacyldisaccharide 1-phosphate intermediate (termed DS-1-P) to form tetraacyldisaccharide 1,4'-bis-phosphate (lipid IVA). This chain is Tetraacyldisaccharide 4'-kinase, found in Legionella pneumophila (strain Lens).